A 324-amino-acid polypeptide reads, in one-letter code: Phospho-N-acetylmuramoyl-pentapeptide-transferase (324 aa).

10 helical membrane-spanning segments follow: residues 5–25, 50–70, 77–97, 117–137, 147–167, 176–196, 203–223, 227–247, 250–270, and 302–322; these read VILF…PILI, GTPT…TIVM, ISPE…LGFL, LIGQ…YNFA, LSFD…VGGS, LDGL…ILAW, VAIF…FNAH, VFMG…IAIL, LEIL…SVIL, and VVVT…YIEV.

This sequence belongs to the glycosyltransferase 4 family. MraY subfamily. The cofactor is Mg(2+).

Its subcellular location is the cell membrane. The catalysed reaction is UDP-N-acetyl-alpha-D-muramoyl-L-alanyl-gamma-D-glutamyl-meso-2,6-diaminopimeloyl-D-alanyl-D-alanine + di-trans,octa-cis-undecaprenyl phosphate = di-trans,octa-cis-undecaprenyl diphospho-N-acetyl-alpha-D-muramoyl-L-alanyl-D-glutamyl-meso-2,6-diaminopimeloyl-D-alanyl-D-alanine + UMP. It participates in cell wall biogenesis; peptidoglycan biosynthesis. Its function is as follows. Catalyzes the initial step of the lipid cycle reactions in the biosynthesis of the cell wall peptidoglycan: transfers peptidoglycan precursor phospho-MurNAc-pentapeptide from UDP-MurNAc-pentapeptide onto the lipid carrier undecaprenyl phosphate, yielding undecaprenyl-pyrophosphoryl-MurNAc-pentapeptide, known as lipid I. In Bacillus subtilis (strain 168), this protein is Phospho-N-acetylmuramoyl-pentapeptide-transferase.